The chain runs to 588 residues: uncharacterized protein (588 aa).

A run of 7 helical transmembrane segments spans residues 14–34, 49–69, 78–98, 184–204, 235–255, 257–274, and 275–292; these read FLLFLPYFIGLLFLGFIKGIV, AVILSLLPVHIVWTFYSIVSA, IFLCLCLPAAIILWPIVGILG, ALVVSVLGILVDPPVISLVAI, VPIAGLAILLWPLAVTGAVIG, VISSIFLGAYAGVVSYQE, and SSFYYGLCYIVASVSIYD. Serine 486 is modified (phosphoserine). The disordered stretch occupies residues 566-588; the sequence is RKGSVNGSDQESQKGVSRNVDIV. A compositionally biased stretch (polar residues) spans 570–581; sequence VNGSDQESQKGV.

Its subcellular location is the membrane. This is an uncharacterized protein from Arabidopsis thaliana (Mouse-ear cress).